We begin with the raw amino-acid sequence, 956 residues long: UvrABC system protein A (956 aa).

ATP is bound at residue 33–40 (GLSGSGKS). Residues 252–279 (CPYCGFSVGELEPRMFSFNSPFGACPTC) form a C4-type zinc finger. ABC transporter domains lie at 309–587 (WRPI…KNSI) and 607–936 (GNGL…KYLK). 639 to 646 (GVSGSGKS) provides a ligand contact to ATP. The segment at 738–764 (CEACKGDGIIKIEMHFLPDVYVPCEVC) adopts a C4-type zinc-finger fold.

This sequence belongs to the ABC transporter superfamily. UvrA family. In terms of assembly, forms a heterotetramer with UvrB during the search for lesions.

It localises to the cytoplasm. The UvrABC repair system catalyzes the recognition and processing of DNA lesions. UvrA is an ATPase and a DNA-binding protein. A damage recognition complex composed of 2 UvrA and 2 UvrB subunits scans DNA for abnormalities. When the presence of a lesion has been verified by UvrB, the UvrA molecules dissociate. This Listeria monocytogenes serotype 4b (strain F2365) protein is UvrABC system protein A.